The primary structure comprises 359 residues: Peptide chain release factor 1 (359 aa).

Gln-238 carries the N5-methylglutamine modification.

This sequence belongs to the prokaryotic/mitochondrial release factor family. In terms of processing, methylated by PrmC. Methylation increases the termination efficiency of RF1.

Its subcellular location is the cytoplasm. Its function is as follows. Peptide chain release factor 1 directs the termination of translation in response to the peptide chain termination codons UAG and UAA. This is Peptide chain release factor 1 from Rhodococcus jostii (strain RHA1).